Consider the following 962-residue polypeptide: Activity-dependent neuroprotective protein 2a (962 aa).

The C2H2-type 1 zinc finger occupies 75–98; the sequence is LCCSLCWYSSRSVPTFRSHIHRCH. The C2H2-type 2; degenerate zinc finger occupies 108 to 130; sequence LMCPYCPFVSSPKVTEQHIQFFH. The C2H2-type 3; degenerate zinc-finger motif lies at 165 to 188; the sequence is YTCATCGYHDSLLYVMKKHVLVNH. The segment at 219–244 adopts a C2H2-type 4 zinc-finger fold; the sequence is YHCKLCKLPAETIEHLLYHILSSEKH. Residues 527-547 form a C2H2-type 5; degenerate zinc finger; the sequence is VKCLRCKILLTEQGIFQHLLH. C2H2-type zinc fingers lie at residues 549 to 572 and 650 to 673; these read LKCL…KKEH and NACP…QTKH. A C2H2-type 8; degenerate zinc finger spans residues 688 to 712; the sequence is YKCIYCFGVYTEKSTPKTISIHVQR. The interval 753 to 781 is disordered; it reads QGAPEFPKPKKEAVTPRNRRRNTKASKTG. A DNA-binding region (homeobox) is located at residues 795-854; the sequence is PMGMERTSFEDRKDFLSQYFHRKPYVTKTEIELLASRLWINKADVKAHFNSKLTKCLKAI.

It localises to the nucleus. May be involved in transcriptional regulation. Required for progression through late erythroid differentiation. May be involved in vasculogenesis. In Danio rerio (Zebrafish), this protein is Activity-dependent neuroprotective protein 2a.